Reading from the N-terminus, the 565-residue chain is Augmin complex subunit dgt3 (565 aa).

Coiled coils occupy residues 135-171 (ELQLREKDLIAECQSKAKQLEELQQENCRLSAEAKKA) and 212-241 (QDYDEFQSAEEDLGREKAKLEDLERGIQFY).

The protein belongs to the HAUS3 family. In terms of assembly, component of the augmin complex composed of dgt2, dgt3, dgt4, dgt5, dgt6, msd1, msd5 and wac. The complex interacts directly or indirectly with microtubules and is required for centrosome-independent generation of spindle microtubules.

It is found in the cytoplasm. It localises to the cytoskeleton. Its subcellular location is the spindle. In terms of biological role, as part of the augmin complex, plays a role in centrosome-independent generation of spindle microtubules. The complex is required for mitotic spindle assembly through its involvement in localizing gamma-tubulin to spindle microtubules. This is Augmin complex subunit dgt3 from Drosophila melanogaster (Fruit fly).